The primary structure comprises 58 residues: Small ribosomal subunit protein bS21 (58 aa).

Positions F37–F58 are disordered. Basic residues predominate over residues V43 to F58.

It belongs to the bacterial ribosomal protein bS21 family.

The protein is Small ribosomal subunit protein bS21 of Enterococcus faecalis (strain ATCC 700802 / V583).